A 624-amino-acid polypeptide reads, in one-letter code: DNA (cytosine-5)-methyltransferase DRM1 (624 aa).

2 consecutive UBA domains span residues 57–100 and 108–149; these read RISD…LFNY and SSKS…LLTY. Residues 160-189 form a disordered region; that stretch reads DMNININDDDDDNLYSLSSDDEEDELNNSS. Acidic residues predominate over residues 166–185; it reads NDDDDDNLYSLSSDDEEDEL. Residues 188–231 enclose the UBA 3 domain; the sequence is SSNEDRILQALIKMGYLREDAAIAIERCGEDASMEEVVDFICAA. The SAM-dependent MTase DRM-type domain maps to 291 to 622; the sequence is MHRPVPIPDI…EAVRRKARHM (332 aa).

It belongs to the class I-like SAM-binding methyltransferase superfamily. DRM-methyltransferase family.

The protein localises to the nucleus. It carries out the reaction a 2'-deoxycytidine in DNA + S-adenosyl-L-methionine = a 5-methyl-2'-deoxycytidine in DNA + S-adenosyl-L-homocysteine + H(+). Its function is as follows. Involved in de novo DNA methylation. Controls asymmetric and CpNpG methylation. Required for FWA gene silencing but not for the maintenance of SUP gene silencing. Functionally redundant to CMT3 to maintain non-CpG methylation. Involved in RNA-directed DNA methylation. This is DNA (cytosine-5)-methyltransferase DRM1 (DRM1) from Arabidopsis thaliana (Mouse-ear cress).